The primary structure comprises 264 residues: Movement protein (264 aa).

The segment at 211 to 264 (RTKSSKRGPKNNNNLGKGRSGGRPKPKSVDEVEEEFDNLIEDEAETSVADSDSY) is disordered. Acidic residues predominate over residues 241-255 (EVEEEFDNLIEDEAE).

This sequence belongs to the tobamovirus movement protein family. Binds to host RBCS at the plasmodesmata; this interaction seems required for viral systemic movement. In resistant plants, interacts with host MBP2C at host microtubules; this interaction prevents virus cell to cell movement. In resistant plants, interacts with host resistance (R) protein (e.g. tomato ToMV resistance protein TM-2(2), AC Q71BG9) at the host plasma membrane; this interaction triggers host defense responses leading to programmed cell death.

It is found in the host cytoplasm. It localises to the host cytoskeleton. Its subcellular location is the host cell junction. The protein localises to the host plasmodesma. In terms of biological role, transports viral genome to neighboring plant cells directly through plasmosdesmata, without any budding. The movement protein allows efficient cell to cell propagation, by bypassing the host cell wall barrier. Forms a ribonucleoprotein complex with viral RNA. Binds microtubules and modulates microtubule stability. Can bind double-stranded DNA. Triggers host hypersensitive defense reaction in incompatible plants harboring resistance (R) proteins. The chain is Movement protein (MP) from Antirrhinum majus (Garden snapdragon).